A 361-amino-acid chain; its full sequence is Chorismate synthase (361 aa).

The NADP(+) site is built by arginine 48 and arginine 54. FMN-binding positions include 125-127, 238-239, glycine 278, 293-297, and arginine 319; these read RSS, NA, and KPTSS.

It belongs to the chorismate synthase family. As to quaternary structure, homotetramer. Requires FMNH2 as cofactor.

The enzyme catalyses 5-O-(1-carboxyvinyl)-3-phosphoshikimate = chorismate + phosphate. The protein operates within metabolic intermediate biosynthesis; chorismate biosynthesis; chorismate from D-erythrose 4-phosphate and phosphoenolpyruvate: step 7/7. Functionally, catalyzes the anti-1,4-elimination of the C-3 phosphate and the C-6 proR hydrogen from 5-enolpyruvylshikimate-3-phosphate (EPSP) to yield chorismate, which is the branch point compound that serves as the starting substrate for the three terminal pathways of aromatic amino acid biosynthesis. This reaction introduces a second double bond into the aromatic ring system. The sequence is that of Chorismate synthase from Citrobacter koseri (strain ATCC BAA-895 / CDC 4225-83 / SGSC4696).